The chain runs to 1712 residues: Latent-transforming growth factor beta-binding protein 1 (1712 aa).

The signal sequence occupies residues 1 to 23 (MAGAWLRWGLLLWAGLLAWSAHG). A disordered region spans residues 65–118 (TAASSRALAGPPAERTRRTSQPGGAALPGLRSPLPPEPARPGGPSRQLHSKAGA). Residues 181 to 213 (TKPSCVPPCQNGGMCLRPQLCVCKPGSKGKACE) enclose the EGF-like 1 domain. Intrachain disulfides connect cysteine 185–cysteine 195, cysteine 189–cysteine 201, and cysteine 203–cysteine 212. N-linked (GlcNAc...) asparagine glycosylation is found at asparagine 339 and asparagine 370. The EGF-like 2 domain occupies 391-423 (RVVICHLPCMNGGQCSSRDKCQCPPNFTGKLCQ). Intrachain disulfides connect cysteine 395/cysteine 405, cysteine 399/cysteine 411, cysteine 413/cysteine 422, cysteine 551/cysteine 573, cysteine 560/cysteine 586, and cysteine 574/cysteine 589. Asparagine 416 is a glycosylation site (N-linked (GlcNAc...) asparagine). Positions 549–601 (GRCFQETIGSQCGKALPGLSKQEDCCGTVGTSWGFNKCQKCPKKQSYHGYTQM) constitute a TB 1 domain. An N-linked (GlcNAc...) asparagine glycan is attached at asparagine 612. In terms of domain architecture, EGF-like 3; calcium-binding spans 618–658 (DINECQLQGVCPNGECLNTMGSYRCSCKMGFGPDPTFSSCV). Intrachain disulfides connect cysteine 622/cysteine 633, cysteine 628/cysteine 642, cysteine 644/cysteine 657, cysteine 671/cysteine 694, cysteine 681/cysteine 706, cysteine 695/cysteine 709, and cysteine 696/cysteine 721. Serine 639 carries an O-linked (Glc) serine glycan. Residues 669–721 (GPCYRLVSPGRHCMHPLSVHLTKQICCCSVGKAWGPHCEKCPLPGTAAFKEIC) form the TB 2 domain. Residues 753 to 799 (NTQPVAKSTHPPPLPAKEEPVEALTSSWEHGPRGAEPEVVTAPPEKE) are disordered. Residues threonine 761 and threonine 793 are each glycosylated (O-linked (GalNAc...) threonine). Residues 865 to 906 (EINECTVNPDICGAGHCINLPVRYTCICYEGYKFSEQLRKCV) enclose the EGF-like 4; calcium-binding domain. 37 disulfide bridges follow: cysteine 869/cysteine 881, cysteine 876/cysteine 890, cysteine 892/cysteine 905, cysteine 911/cysteine 923, cysteine 918/cysteine 932, cysteine 934/cysteine 947, cysteine 953/cysteine 964, cysteine 959/cysteine 973, cysteine 976/cysteine 988, cysteine 994/cysteine 1005, cysteine 1000/cysteine 1014, cysteine 1017/cysteine 1028, cysteine 1034/cysteine 1045, cysteine 1040/cysteine 1054, cysteine 1056/cysteine 1069, cysteine 1075/cysteine 1086, cysteine 1081/cysteine 1095, cysteine 1097/cysteine 1110, cysteine 1116/cysteine 1127, cysteine 1122/cysteine 1136, cysteine 1138/cysteine 1151, cysteine 1157/cysteine 1169, cysteine 1164/cysteine 1178, cysteine 1180/cysteine 1192, cysteine 1198/cysteine 1210, cysteine 1204/cysteine 1219, cysteine 1221/cysteine 1234, cysteine 1240/cysteine 1252, cysteine 1246/cysteine 1261, cysteine 1263/cysteine 1276, cysteine 1282/cysteine 1294, cysteine 1289/cysteine 1303, cysteine 1305/cysteine 1319, cysteine 1340/cysteine 1363, cysteine 1350/cysteine 1375, cysteine 1364/cysteine 1380, and cysteine 1365/cysteine 1392. An EGF-like 5; calcium-binding domain is found at 907–948 (DIDECAQVRHLCSQGRCENTEGSFLCVCPAGFMASEEGTNCI). O-linked (Glc) serine glycosylation occurs at serine 929. An EGF-like 6; calcium-binding domain is found at 949–989 (DVDECLRPDMCRDGRCINTAGAFRCEYCDSGYRMSRRGYCE). At asparagine 966 the chain carries (3R)-3-hydroxyasparagine. Residues 990-1029 (DIDECLKPSTCPEEQCVNTPGSYQCVPCTEGFRGWNGQCL) enclose the EGF-like 7; calcium-binding domain. A glycan (O-linked (Glc) serine) is linked at serine 1011. Residues 1030–1070 (DVDECLQPKVCTNGSCTNLEGSYMCSCHRGYSPTPDHRHCQ) form the EGF-like 8; calcium-binding domain. A glycan (N-linked (GlcNAc...) asparagine) is linked at asparagine 1042. Serine 1051 carries an O-linked (Glc) serine glycan. In terms of domain architecture, EGF-like 9; calcium-binding spans 1071-1111 (DIDECQQGNLCMNGQCRNTDGSFRCTCGQGYQLSAAKDQCE). Residues 1112 to 1152 (DIDECEHHHLCSHGQCRNTEGSFQCVCNQGYRASVLGDHCE) form the EGF-like 10; calcium-binding domain. Asparagine 1129 bears the (3R)-3-hydroxyasparagine mark. O-linked (Glc) serine glycosylation occurs at serine 1133. An EGF-like 11; calcium-binding domain is found at 1153–1193 (DINECLEDSSVCQGGDCINTAGSYDCTCPDGFQLNDNKGCQ). The EGF-like 12; calcium-binding domain maps to 1194–1235 (DINECAQPGLCGSHGECLNTQGSFHCVCEQGFSISADGRTCE). O-linked (Glc) serine glycosylation is present at serine 1216. The region spanning 1236-1277 (DIDECVNNTVCDSHGFCDNTAGSFRCLCYQGFQAPQDGQGCV) is the EGF-like 13; calcium-binding domain. N-linked (GlcNAc...) asparagine glycosylation is present at asparagine 1242. One can recognise an EGF-like 14; calcium-binding domain in the interval 1278 to 1320 (DVNECELLSGVCGEAFCENVEGSFLCVCADENQEYSPMTGQCR). An 8-Cys3 region region spans residues 1335–1402 (EEKKECYYNL…PRGKGLVPAG (68 aa)). Residues 1338–1392 (KECYYNLNDASLCDNVLAPNVTKQECCCTSGAGWGDNCEIFPCPVQGTAEFTEMC) form the TB 3 domain. N-linked (GlcNAc...) asparagine glycosylation occurs at asparagine 1357. Position 1405 is a phosphoserine (serine 1405). The EGF-like 15; calcium-binding domain maps to 1415 to 1457 (DADECLLFGEEICKNGYCLNTQPGYECYCKQGTYYDPVKLQCF). 10 cysteine pairs are disulfide-bonded: cysteine 1419–cysteine 1432, cysteine 1427–cysteine 1441, cysteine 1443–cysteine 1456, cysteine 1462–cysteine 1473, cysteine 1468–cysteine 1482, cysteine 1484–cysteine 1497, cysteine 1517–cysteine 1541, cysteine 1527–cysteine 1553, cysteine 1542–cysteine 1556, and cysteine 1543–cysteine 1568. The 41-residue stretch at 1458 to 1498 (DMDECQDPNSCIDGQCVNTEGSYNCFCTHPMVLDASEKRCV) folds into the EGF-like 16; calcium-binding domain. Residue serine 1479 is glycosylated (O-linked (Glc) serine). The segment at 1498–1712 (VQPTESNEQI…LNLDKESDLE (215 aa)) is C-terminal domain. Residues 1515-1568 (DLCWEHLSEEYVCSRPLVGKQTTYTECCCLYGEAWGMQCALCPMKDSDDYAQLC) enclose the TB 4 domain. Residues serine 1588 and serine 1607 each carry the phosphoserine modification. The EGF-like 17 domain occupies 1612 to 1652 (QAEECGILNGCENGRCVRVQEGYTCDCFDGYHLDMAKMTCV). Disulfide bonds link cysteine 1616–cysteine 1627, cysteine 1622–cysteine 1636, cysteine 1638–cysteine 1651, cysteine 1657–cysteine 1672, cysteine 1667–cysteine 1681, and cysteine 1683–cysteine 1696. In terms of domain architecture, EGF-like 18; calcium-binding spans 1653 to 1697 (DVNECSELNNRMSLCKNAKCINTEGSYKCLCLPGYIPSDKPNYCT). Serine 1678 carries O-linked (Glc) serine glycosylation.

Belongs to the LTBP family. In terms of assembly, interacts with TGFB1; associates via disulfide bonds with the Latency-associated peptide chain (LAP) regulatory chain of TGFB1, leading to regulate activation of TGF-beta-1. LTBP1 does not bind directly to TGF-beta-1, the active chain of TGFB1. Interacts (via C-terminal domain) with FBN1 (via N-terminal domain). Interacts with FBN2. Interacts with ADAMTSL2. Interacts with EFEMP2. Contains hydroxylated asparagine residues. Post-translationally, two intrachain disulfide bonds from the TB3 domain are rearranged upon TGFB1 binding, and form interchain bonds with TGFB1 propeptide, anchoring it to the extracellular matrix. In terms of processing, O-glycosylated on serine residues by POGLUT2 and POGLUT3.

Its subcellular location is the secreted. The protein localises to the extracellular space. It is found in the extracellular matrix. Key regulator of transforming growth factor beta (TGFB1, TGFB2 and TGFB3) that controls TGF-beta activation by maintaining it in a latent state during storage in extracellular space. Associates specifically via disulfide bonds with the Latency-associated peptide (LAP), which is the regulatory chain of TGF-beta, and regulates integrin-dependent activation of TGF-beta. Outcompeted by LRRC32/GARP for binding to LAP regulatory chain of TGF-beta. The polypeptide is Latent-transforming growth factor beta-binding protein 1 (Mus musculus (Mouse)).